A 696-amino-acid chain; its full sequence is C2 domain-containing protein 2 (696 aa).

Residues 13 to 33 (AQWLALVSLFVAALATVGLYL) form a helical membrane-spanning segment. The 192-residue stretch at 51–242 (EPGEGPRPGS…PTTVKEAQNL (192 aa)) folds into the SMP-LBD domain. At S60 the chain carries Phosphoserine. In terms of domain architecture, C2 spans 245–362 (AASTAQESCP…KKQPSGPQSF (118 aa)). 2 positions are modified to phosphoserine: S435 and S441. At T445 the chain carries Phosphothreonine. A disordered region spans residues 539 to 580 (VDSTHQEDAPSHPERAAASAPPEEAESAQASLAPKPQEDELD). Positions 542–553 (THQEDAPSHPER) are enriched in basic and acidic residues. Positions 554–572 (AAASAPPEEAESAQASLAP) are enriched in low complexity. A Phosphoserine modification is found at S581.

Its subcellular location is the membrane. The sequence is that of C2 domain-containing protein 2 (C2CD2) from Homo sapiens (Human).